A 501-amino-acid polypeptide reads, in one-letter code: IQ domain-containing protein M (501 aa).

A compositionally biased stretch (basic and acidic residues) spans 237 to 247 (ERQPIKPEPKS). The interval 237–262 (ERQPIKPEPKSQPRIKGTPNKTDKLD) is disordered. Residues 290 to 319 (LIRMVTVMQAHVRGWLERKRLQRVMTKALD) form the IQ domain.

This chain is IQ domain-containing protein M, found in Homo sapiens (Human).